Here is a 290-residue protein sequence, read N- to C-terminus: uncharacterized protein (290 aa).

It is found in the cytoplasm. This is an uncharacterized protein from Saccharomyces cerevisiae (strain ATCC 204508 / S288c) (Baker's yeast).